The sequence spans 433 residues: Histidinol dehydrogenase (433 aa).

3 residues coordinate NAD(+): tyrosine 129, glutamine 191, and asparagine 214. Residues serine 237, glutamine 259, and histidine 262 each contribute to the substrate site. Zn(2+) contacts are provided by glutamine 259 and histidine 262. Residues glutamate 326 and histidine 327 each act as proton acceptor in the active site. Substrate contacts are provided by histidine 327, aspartate 360, glutamate 414, and histidine 419. Aspartate 360 is a binding site for Zn(2+). A Zn(2+)-binding site is contributed by histidine 419.

This sequence belongs to the histidinol dehydrogenase family. It depends on Zn(2+) as a cofactor.

The catalysed reaction is L-histidinol + 2 NAD(+) + H2O = L-histidine + 2 NADH + 3 H(+). It participates in amino-acid biosynthesis; L-histidine biosynthesis; L-histidine from 5-phospho-alpha-D-ribose 1-diphosphate: step 9/9. In terms of biological role, catalyzes the sequential NAD-dependent oxidations of L-histidinol to L-histidinaldehyde and then to L-histidine. This Methanosarcina mazei (strain ATCC BAA-159 / DSM 3647 / Goe1 / Go1 / JCM 11833 / OCM 88) (Methanosarcina frisia) protein is Histidinol dehydrogenase.